A 488-amino-acid polypeptide reads, in one-letter code: Protein nucleotidyltransferase YdiU (488 aa).

Positions 91, 93, 94, 114, 126, 127, 177, and 184 each coordinate ATP. D253 (proton acceptor) is an active-site residue. Mg(2+) contacts are provided by N254 and D263. D263 contacts ATP.

This sequence belongs to the SELO family. Requires Mg(2+) as cofactor. The cofactor is Mn(2+).

The enzyme catalyses L-seryl-[protein] + ATP = 3-O-(5'-adenylyl)-L-seryl-[protein] + diphosphate. It carries out the reaction L-threonyl-[protein] + ATP = 3-O-(5'-adenylyl)-L-threonyl-[protein] + diphosphate. It catalyses the reaction L-tyrosyl-[protein] + ATP = O-(5'-adenylyl)-L-tyrosyl-[protein] + diphosphate. The catalysed reaction is L-histidyl-[protein] + UTP = N(tele)-(5'-uridylyl)-L-histidyl-[protein] + diphosphate. The enzyme catalyses L-seryl-[protein] + UTP = O-(5'-uridylyl)-L-seryl-[protein] + diphosphate. It carries out the reaction L-tyrosyl-[protein] + UTP = O-(5'-uridylyl)-L-tyrosyl-[protein] + diphosphate. Its function is as follows. Nucleotidyltransferase involved in the post-translational modification of proteins. It can catalyze the addition of adenosine monophosphate (AMP) or uridine monophosphate (UMP) to a protein, resulting in modifications known as AMPylation and UMPylation. This chain is Protein nucleotidyltransferase YdiU, found in Bacillus cereus (strain ZK / E33L).